A 98-amino-acid chain; its full sequence is Large ribosomal subunit protein bL25 (98 aa).

The protein belongs to the bacterial ribosomal protein bL25 family. Part of the 50S ribosomal subunit; part of the 5S rRNA/L5/L18/L25 subcomplex. Contacts the 5S rRNA. Binds to the 5S rRNA independently of L5 and L18.

In terms of biological role, this is one of the proteins that binds to the 5S RNA in the ribosome where it forms part of the central protuberance. The protein is Large ribosomal subunit protein bL25 of Synechocystis sp. (strain ATCC 27184 / PCC 6803 / Kazusa).